Here is a 265-residue protein sequence, read N- to C-terminus: Mlc titration factor A (265 aa).

Zn(2+) contacts are provided by H111, H148, H152, and E211.

It belongs to the MtfA family. Interacts with Mlc. Zn(2+) serves as cofactor.

It localises to the cytoplasm. Involved in the modulation of the activity of the glucose-phosphotransferase system (glucose-PTS). Interacts with the transcriptional repressor Mlc, preventing its interaction with DNA and leading to the modulation of expression of genes regulated by Mlc, including ptsG, which encodes the PTS system glucose-specific EIICB component. Functionally, shows zinc-dependent metallopeptidase activity. This chain is Mlc titration factor A, found in Escherichia coli O7:K1 (strain IAI39 / ExPEC).